Consider the following 96-residue polypeptide: NADH-ubiquinone oxidoreductase chain 4L (96 aa).

3 helical membrane passes run 2–22 (IMFL…FCFV), 28–48 (LLSM…MLFI), and 62–82 (MFLT…VSMI).

The protein belongs to the complex I subunit 4L family.

The protein localises to the mitochondrion membrane. It catalyses the reaction a ubiquinone + NADH + 5 H(+)(in) = a ubiquinol + NAD(+) + 4 H(+)(out). Functionally, core subunit of the mitochondrial membrane respiratory chain NADH dehydrogenase (Complex I) that is believed to belong to the minimal assembly required for catalysis. Complex I functions in the transfer of electrons from NADH to the respiratory chain. The immediate electron acceptor for the enzyme is believed to be ubiquinone. The chain is NADH-ubiquinone oxidoreductase chain 4L (mt:ND4L) from Drosophila nasuta F (Fruit fly).